The sequence spans 85 residues: Putative membrane protein insertion efficiency factor (85 aa).

Residues 62-85 form a disordered region; the sequence is PLGSDGYDPVPEPKDRKPPHSPAG.

This sequence belongs to the UPF0161 family.

It localises to the cell inner membrane. In terms of biological role, could be involved in insertion of integral membrane proteins into the membrane. This Ruegeria pomeroyi (strain ATCC 700808 / DSM 15171 / DSS-3) (Silicibacter pomeroyi) protein is Putative membrane protein insertion efficiency factor.